We begin with the raw amino-acid sequence, 196 residues long: Small ribosomal subunit protein uS4c (196 aa).

Positions 89–150 constitute an S4 RNA-binding domain; the sequence is MRLDNIVFRL…NQRSKRLVQN (62 aa).

It belongs to the universal ribosomal protein uS4 family. As to quaternary structure, part of the 30S ribosomal subunit. Contacts protein S5. The interaction surface between S4 and S5 is involved in control of translational fidelity.

The protein localises to the plastid. Its subcellular location is the chloroplast. Its function is as follows. One of the primary rRNA binding proteins, it binds directly to 16S rRNA where it nucleates assembly of the body of the 30S subunit. In terms of biological role, with S5 and S12 plays an important role in translational accuracy. This chain is Small ribosomal subunit protein uS4c (rps4), found in Eleusine indica (Goosegrass).